We begin with the raw amino-acid sequence, 731 residues long: MSNPGTRRNGSSIKIRLTVLCAKNLAKKDFFRLPDPFAKIVVDGSGQCHSTDTVKNTLDPKWNQHYDLYVGKTDSITISVWNHKKIHKKQGAGFLGCVRLLSNAISRLKDTGYQRLDLCKLNPSDTDAVRGQIVVSLQTRDRIGGGGSVVDCRGLLENEGTVYEDSGPGRPLSCLMEEPAPYTDGTGAAAGGGNCRFVESPSQDQRLLVQRLRNPEVRGPLQTPQNRPHGHQSPELPEGYEQRTTVQGQVYFLHTQTGVSTWHDPRIPRDLNSVNCDELGPLPPGWEVRSTVSGRIYFVDHNNRTTQFTDPRLHHIMNHQCQLKEPSQPLQLPSEGSVEDEELPAQRYERDLVQKLKVLRHELSLQQPQAGHCRIEVSREEIFEESYRQIMKMRPKDLKKRLMVKFRGEEGLDYGGVAREWLYLLCHEMLNPYYGLFQYSTDNIYTLQINPDSSINPDHLSYFHFVGRIMGLAVFHGHYINGGFTVPFYKQLLGKPIQLSDLESVDPELHKSLVWILENDITPVLDHTFCVEHNAFGRILQHELKPNGRNVPVTEENKKEYVRLYVNWRFMRGIEAQFLALQKGFNELIPQHLLKPFDQKELELIIGGLDKIDLNDWKSNTRLKHCVADSNIVRWFWQAVETFDEERRARLLQFVTGSTRVPLQGFKALQGSTGAAGPRLFTIHLIDANTDNLPKAHTCFNRIDIPPYESYEKLYEKLLTAVEETCGFAVE.

One can recognise a C2 domain in the interval 1-120; that stretch reads MSNPGTRRNG…TGYQRLDLCK (120 aa). Phosphoserine is present on Ser200. The disordered stretch occupies residues 216–237; the sequence is EVRGPLQTPQNRPHGHQSPELP. WW domains are found at residues 234–267 and 280–313; these read PELPEGYEQRTTVQGQVYFLHTQTGVSTWHDPRI and GPLPPGWEVRSTVSGRIYFVDHNNRTTQFTDPRL. Glycyl lysine isopeptide (Lys-Gly) (interchain with G-Cter in ubiquitin) cross-links involve residues Lys355 and Lys357. Residues 394–731 enclose the HECT domain; that stretch reads RPKDLKKRLM…VEETCGFAVE (338 aa). Cys699 (glycyl thioester intermediate) is an active-site residue.

As to quaternary structure, interacts with TRAF4. Interacts (via HECT domain) with FBXL15 (via LRR repeats). Interacts with SMAD7 and TGFBR1; SMAD7 recruits SMURF1 to TGFBR1 and regulates TGF-beta receptor degradation. Interacts with MAVS; the interaction is mediated by NDFIP1. Post-translationally, auto-ubiquitinated in presence of NDFIP1. Ubiquitinated by the SCF(FBXL15) complex at Lys-355 and Lys-357, leading to its degradation by the proteasome. Lys-357 is the primary ubiquitination site.

It is found in the cytoplasm. The protein resides in the cell membrane. It catalyses the reaction S-ubiquitinyl-[E2 ubiquitin-conjugating enzyme]-L-cysteine + [acceptor protein]-L-lysine = [E2 ubiquitin-conjugating enzyme]-L-cysteine + N(6)-ubiquitinyl-[acceptor protein]-L-lysine.. It participates in protein modification; protein ubiquitination. E3 ubiquitin-protein ligase that acts as a negative regulator of BMP signaling pathway. Mediates ubiquitination and degradation of SMAD1 and SMAD5, 2 receptor-regulated SMADs specific for the BMP pathway. Promotes ubiquitination and subsequent proteasomal degradation of TRAF family members and RHOA. Promotes ubiquitination and subsequent proteasomal degradation of MAVS. Acts as an antagonist of TGF-beta signaling by ubiquitinating TGFBR1 and targeting it for degradation. Plays a role in dendrite formation by melanocytes. This is E3 ubiquitin-protein ligase SMURF1 (Smurf1) from Mus musculus (Mouse).